The primary structure comprises 427 residues: N-acylglucosamine 2-epimerase (427 aa).

The tract at residues leucine 195–leucine 216 is leucine-zipper.

The protein belongs to the N-acylglucosamine 2-epimerase family. In terms of assembly, homodimer. Forms a heterodimer with renin and inhibits its activity.

The enzyme catalyses an N-acyl-D-glucosamine = an N-acyl-D-mannosamine. It functions in the pathway amino-sugar metabolism; N-acetylneuraminate degradation. Its activity is regulated as follows. Inhibited by N-ethylmaleimide, 5,5'-dithiobis-2-nitrobenzoate and iodoacetic acid. Its function is as follows. Catalyzes the interconversion of N-acetylglucosamine to N-acetylmannosamine. Involved in the N-glycolylneuraminic acid (Neu5Gc) degradation pathway: although human is not able to catalyze formation of Neu5Gc due to the inactive CMAHP enzyme, Neu5Gc is present in food and must be degraded. This chain is N-acylglucosamine 2-epimerase (RENBP), found in Homo sapiens (Human).